Here is a 304-residue protein sequence, read N- to C-terminus: Mycothiol acetyltransferase (304 aa).

Residue E36 coordinates 1D-myo-inositol 2-(L-cysteinylamino)-2-deoxy-alpha-D-glucopyranoside. Residue 73 to 75 (LFV) coordinates acetyl-CoA. In terms of domain architecture, N-acetyltransferase spans 145–304 (LEIQTYTESV…EEHCVWAKSD (160 aa)). E179, K225, and E236 together coordinate 1D-myo-inositol 2-(L-cysteinylamino)-2-deoxy-alpha-D-glucopyranoside. 240–242 (VGL) contributes to the acetyl-CoA binding site. Y274 is a 1D-myo-inositol 2-(L-cysteinylamino)-2-deoxy-alpha-D-glucopyranoside binding site. 279 to 284 (NDPAVK) serves as a coordination point for acetyl-CoA.

It belongs to the acetyltransferase family. MshD subfamily. Monomer.

It catalyses the reaction 1D-myo-inositol 2-(L-cysteinylamino)-2-deoxy-alpha-D-glucopyranoside + acetyl-CoA = mycothiol + CoA + H(+). Its function is as follows. Catalyzes the transfer of acetyl from acetyl-CoA to desacetylmycothiol (Cys-GlcN-Ins) to form mycothiol. This is Mycothiol acetyltransferase from Corynebacterium aurimucosum (strain ATCC 700975 / DSM 44827 / CIP 107346 / CN-1) (Corynebacterium nigricans).